The chain runs to 188 residues: Protein Cripto (188 aa).

The signal sequence occupies residues 1–30; sequence MDCRKMARFSYSVIWIMAISKVFELGLVAG. The region spanning 78–107 is the EGF-like domain; sequence LNRTCCLNGGTCMLGSFCACPPSFYGRNCE. Residue asparagine 79 is glycosylated (N-linked (GlcNAc...) asparagine). Cystine bridges form between cysteine 82–cysteine 89, cysteine 83–cysteine 95, cysteine 97–cysteine 106, cysteine 115–cysteine 133, cysteine 128–cysteine 149, and cysteine 131–cysteine 140. The GPI-anchor amidated aspartate moiety is linked to residue aspartate 150. A propeptide spans 151–188 (removed in mature form); that stretch reads GLVMDEHLVASRTPELPPSARTTTFMLVGICLSIQSYY.

Belongs to the EGF-CFC (Cripto-1/FRL1/Cryptic) family. In terms of assembly, interacts with the activin type-1 receptor ACVR1B. In terms of processing, the GPI-anchor is attached to the protein in the endoplasmic reticulum and serves to target the protein to the cell surface. There, it is processed by GPI processing phospholipase A2 (TMEM8A), removing an acyl-chain at the sn-2 position of GPI and releasing CRIPTO as a lysophosphatidylinositol-bearing form, which is further cleaved by phospholipase D (GPLD1) into a soluble form. As to expression, preferentially expressed in gastric and colorectal carcinomas than in their normal counterparts. Expressed in breast and lung.

Its subcellular location is the cell membrane. The protein localises to the secreted. Functionally, GPI-anchored cell membrane protein involved in Nodal signaling. Cell-associated CRIPTO acts as a Nodal coreceptor in cis. Shedding of CRIPTO by TMEM8A modulates Nodal signaling by allowing soluble CRIPTO to act as a Nodal coreceptor on other cells. Could play a role in the determination of the epiblastic cells that subsequently give rise to the mesoderm. This Homo sapiens (Human) protein is Protein Cripto.